Reading from the N-terminus, the 448-residue chain is Putative flavin-containing monooxygenase FMO GS-OX-like 10 (448 aa).

18–23 (GAGAAG) serves as a coordination point for FAD. An NADP(+)-binding site is contributed by 212–217 (GSSVSG).

The protein belongs to the FMO family. It depends on FAD as a cofactor.

Catalyzes the conversion of methylthioalkyl glucosinolates of any chain length into methylsulfinylalkyl glucosinolates. This is Putative flavin-containing monooxygenase FMO GS-OX-like 10 from Arabidopsis thaliana (Mouse-ear cress).